The chain runs to 384 residues: O-phospho-L-seryl-tRNA:Cys-tRNA synthase 1 (384 aa).

Residues 88–89 (AR), asparagine 195, and 218–220 (SGH) contribute to the pyridoxal 5'-phosphate site. The residue at position 221 (lysine 221) is an N6-(pyridoxal phosphate)lysine.

It belongs to the SepCysS family. Homodimer. Interacts with SepRS. The cofactor is pyridoxal 5'-phosphate.

The enzyme catalyses O-phospho-L-seryl-tRNA(Cys) + hydrogen sulfide + H(+) = L-cysteinyl-tRNA(Cys) + phosphate. Functionally, converts O-phospho-L-seryl-tRNA(Cys) (Sep-tRNA(Cys)) to L-cysteinyl-tRNA(Cys) (Cys-tRNA(Cys)). In Methanocella arvoryzae (strain DSM 22066 / NBRC 105507 / MRE50), this protein is O-phospho-L-seryl-tRNA:Cys-tRNA synthase 1.